A 215-amino-acid chain; its full sequence is Ependymin (215 aa).

An N-terminal signal peptide occupies residues 1–20 (MHTVKLLCVVFSCLCAVAWA). N-linked (GlcNAc...) asparagine glycans are attached at residues Asn71 and Asn94.

This sequence belongs to the ependymin family. In terms of assembly, forms disulfide-linked dimers. In terms of processing, binds calcium through the terminal sialic acids. In terms of tissue distribution, EPDs are synthesized in the meninx and secreted in the cerebrospinal fluid.

The protein localises to the secreted. May play a role in neural plasticity. May be involved during axon regeneration. This Cyprinus carpio (Common carp) protein is Ependymin (epd).